The chain runs to 284 residues: MEMO1 family protein SSO0066 (284 aa).

Belongs to the MEMO1 family.

In Saccharolobus solfataricus (strain ATCC 35092 / DSM 1617 / JCM 11322 / P2) (Sulfolobus solfataricus), this protein is MEMO1 family protein SSO0066.